The primary structure comprises 475 residues: Aspartyl/glutamyl-tRNA(Asn/Gln) amidotransferase subunit B (475 aa).

It belongs to the GatB/GatE family. GatB subfamily. In terms of assembly, heterotrimer of A, B and C subunits.

The catalysed reaction is L-glutamyl-tRNA(Gln) + L-glutamine + ATP + H2O = L-glutaminyl-tRNA(Gln) + L-glutamate + ADP + phosphate + H(+). The enzyme catalyses L-aspartyl-tRNA(Asn) + L-glutamine + ATP + H2O = L-asparaginyl-tRNA(Asn) + L-glutamate + ADP + phosphate + 2 H(+). Its function is as follows. Allows the formation of correctly charged Asn-tRNA(Asn) or Gln-tRNA(Gln) through the transamidation of misacylated Asp-tRNA(Asn) or Glu-tRNA(Gln) in organisms which lack either or both of asparaginyl-tRNA or glutaminyl-tRNA synthetases. The reaction takes place in the presence of glutamine and ATP through an activated phospho-Asp-tRNA(Asn) or phospho-Glu-tRNA(Gln). The chain is Aspartyl/glutamyl-tRNA(Asn/Gln) amidotransferase subunit B from Macrococcus caseolyticus (strain JCSC5402) (Macrococcoides caseolyticum).